The following is a 227-amino-acid chain: Cytidylate kinase (227 aa).

12–20 lines the ATP pocket; that stretch reads GPSGAGKGT.

The protein belongs to the cytidylate kinase family. Type 1 subfamily.

It localises to the cytoplasm. The catalysed reaction is CMP + ATP = CDP + ADP. It carries out the reaction dCMP + ATP = dCDP + ADP. The sequence is that of Cytidylate kinase from Photorhabdus laumondii subsp. laumondii (strain DSM 15139 / CIP 105565 / TT01) (Photorhabdus luminescens subsp. laumondii).